Reading from the N-terminus, the 393-residue chain is Protein TsgA (393 aa).

12 helical membrane passes run 11–31 (WISF…GMVM), 51–71 (FLNA…EIVP), 78–98 (FGFI…SLAL), 101–121 (AAMF…TFLI), 134–154 (LLFT…VAAF), 162–182 (WYWV…LTFG), 206–226 (IGVL…LGFI), 245–265 (ALVS…SFIL), 273–293 (ILTV…TGTQ), 298–318 (WFIL…ITLG), 332–352 (FILT…GPIV), and 361–381 (LLTA…LGFV).

Belongs to the major facilitator superfamily. TsgA family.

It localises to the cell inner membrane. This is Protein TsgA from Salmonella arizonae (strain ATCC BAA-731 / CDC346-86 / RSK2980).